The primary structure comprises 603 residues: ATP-dependent RNA helicase MRH4, mitochondrial (603 aa).

The N-terminal 71 residues, 1–71 (MISTGLPLFT…GNGAGAGARV (71 aa)), are a transit peptide targeting the mitochondrion. Residues 151–158 (VIKPTPVQ) carry the Q motif motif. Residues 193–409 (KNEEQKTKIF…LRLFPDQKSL (217 aa)) enclose the Helicase ATP-binding domain. 206–213 (AETGSGKT) serves as a coordination point for ATP. Positions 357–360 (DEAD) match the DEAD box motif. The region spanning 443–603 (CLAQAIYAIS…SAIMKGSRIG (161 aa)) is the Helicase C-terminal domain.

It belongs to the DEAD box helicase family. MRH4 subfamily.

It localises to the mitochondrion. It catalyses the reaction ATP + H2O = ADP + phosphate + H(+). Its function is as follows. ATP-binding RNA helicase involved in mitochondrial RNA metabolism. Required for maintenance of mitochondrial DNA. In Lodderomyces elongisporus (strain ATCC 11503 / CBS 2605 / JCM 1781 / NBRC 1676 / NRRL YB-4239) (Yeast), this protein is ATP-dependent RNA helicase MRH4, mitochondrial (MRH4).